Here is a 320-residue protein sequence, read N- to C-terminus: Putative olfactory receptor 2W5 pseudogene (320 aa).

Residue N5 is glycosylated (N-linked (GlcNAc...) asparagine). Helical transmembrane passes span 30–50, 58–78, 98–118, and 140–160; these read VILI…LLLV, PMYF…ASIA, VAQL…LVVM, and LCLQ…FIMC. The cysteines at positions 97 and 179 are disulfide-linked. The interval 267-320 is disordered; that stretch reads LPRSGEVPDSLLHHRHSQHQPPHLHFEEQGCEGDHEETSGVGERGWGASTRGTL. Residues 290–304 show a composition bias toward basic and acidic residues; it reads LHFEEQGCEGDHEET.

It belongs to the G-protein coupled receptor 1 family.

The protein localises to the cell membrane. Odorant receptor. The sequence is that of Putative olfactory receptor 2W5 pseudogene from Homo sapiens (Human).